A 303-amino-acid chain; its full sequence is UDP-N-acetylenolpyruvoylglucosamine reductase (303 aa).

The region spanning 27 to 207 (KVGGISQVFY…TSISQKLQKI (181 aa)) is the FAD-binding PCMH-type domain. Arginine 175 is an active-site residue. Serine 224 functions as the Proton donor in the catalytic mechanism. Glutamate 294 is a catalytic residue.

This sequence belongs to the MurB family. It depends on FAD as a cofactor.

It localises to the cytoplasm. It catalyses the reaction UDP-N-acetyl-alpha-D-muramate + NADP(+) = UDP-N-acetyl-3-O-(1-carboxyvinyl)-alpha-D-glucosamine + NADPH + H(+). It functions in the pathway cell wall biogenesis; peptidoglycan biosynthesis. In terms of biological role, cell wall formation. The polypeptide is UDP-N-acetylenolpyruvoylglucosamine reductase (Orientia tsutsugamushi (strain Boryong) (Rickettsia tsutsugamushi)).